The sequence spans 290 residues: ATP synthase gamma chain (290 aa).

Belongs to the ATPase gamma chain family. F-type ATPases have 2 components, CF(1) - the catalytic core - and CF(0) - the membrane proton channel. CF(1) has five subunits: alpha(3), beta(3), gamma(1), delta(1), epsilon(1). CF(0) has three main subunits: a, b and c.

The protein resides in the cell inner membrane. In terms of biological role, produces ATP from ADP in the presence of a proton gradient across the membrane. The gamma chain is believed to be important in regulating ATPase activity and the flow of protons through the CF(0) complex. The chain is ATP synthase gamma chain from Dictyoglomus thermophilum (strain ATCC 35947 / DSM 3960 / H-6-12).